The sequence spans 286 residues: Release factor glutamine methyltransferase (286 aa).

Residues 121 to 125 (GTGTG), Asp-144, Trp-172, and Asn-188 each bind S-adenosyl-L-methionine. 188–191 (NPPY) contributes to the substrate binding site.

Belongs to the protein N5-glutamine methyltransferase family. PrmC subfamily.

It carries out the reaction L-glutaminyl-[peptide chain release factor] + S-adenosyl-L-methionine = N(5)-methyl-L-glutaminyl-[peptide chain release factor] + S-adenosyl-L-homocysteine + H(+). Its function is as follows. Methylates the class 1 translation termination release factors RF1/PrfA and RF2/PrfB on the glutamine residue of the universally conserved GGQ motif. The sequence is that of Release factor glutamine methyltransferase from Vibrio cholerae serotype O1 (strain ATCC 39315 / El Tor Inaba N16961).